A 107-amino-acid polypeptide reads, in one-letter code: Growth-regulated alpha protein (107 aa).

Positions 1–34 are cleaved as a signal peptide; it reads MARAALSAAPSNPRLLRVALLLLLLVAAGRRAAG. 2 disulfides stabilise this stretch: cysteine 43–cysteine 69 and cysteine 45–cysteine 85.

This sequence belongs to the intercrine alpha (chemokine CxC) family. Post-translationally, N-terminal processed forms GRO-alpha(4-73), GRO-alpha(5-73) and GRO-alpha(6-73) are produced by proteolytic cleavage after secretion from peripheral blood monocytes.

Its subcellular location is the secreted. Has chemotactic activity for neutrophils. May play a role in inflammation and exerts its effects on endothelial cells in an autocrine fashion. In vitro, the processed forms GRO-alpha(4-73), GRO-alpha(5-73) and GRO-alpha(6-73) show a 30-fold higher chemotactic activity. The chain is Growth-regulated alpha protein (CXCL1) from Homo sapiens (Human).